The chain runs to 379 residues: 1-deoxy-D-xylulose 5-phosphate reductoisomerase (379 aa).

NADPH contacts are provided by Thr-10, Gly-11, Ser-12, Ile-13, Asn-39, and Asn-121. Lys-122 provides a ligand contact to 1-deoxy-D-xylulose 5-phosphate. NADPH is bound at residue Glu-123. A Mn(2+)-binding site is contributed by Asp-147. 4 residues coordinate 1-deoxy-D-xylulose 5-phosphate: Ser-148, Glu-149, Ser-173, and His-196. Glu-149 provides a ligand contact to Mn(2+). Residue Gly-202 participates in NADPH binding. 1-deoxy-D-xylulose 5-phosphate is bound by residues Ser-209, Asn-214, Lys-215, and Glu-218. Glu-218 lines the Mn(2+) pocket.

Belongs to the DXR family. Requires Mg(2+) as cofactor. Mn(2+) is required as a cofactor.

The enzyme catalyses 2-C-methyl-D-erythritol 4-phosphate + NADP(+) = 1-deoxy-D-xylulose 5-phosphate + NADPH + H(+). Its pathway is isoprenoid biosynthesis; isopentenyl diphosphate biosynthesis via DXP pathway; isopentenyl diphosphate from 1-deoxy-D-xylulose 5-phosphate: step 1/6. Catalyzes the NADPH-dependent rearrangement and reduction of 1-deoxy-D-xylulose-5-phosphate (DXP) to 2-C-methyl-D-erythritol 4-phosphate (MEP). This chain is 1-deoxy-D-xylulose 5-phosphate reductoisomerase, found in Chlamydia caviae (strain ATCC VR-813 / DSM 19441 / 03DC25 / GPIC) (Chlamydophila caviae).